Reading from the N-terminus, the 652-residue chain is Fimbrin-4 (652 aa).

Calponin-homology (CH) domains are found at residues 116 to 233 (ESEK…KIQL), 261 to 364 (LAPE…HHRN), 388 to 494 (SREE…RYTM), and 509 to 617 (DITE…NWSL). Actin-binding stretches follow at residues 116 to 364 (ESEK…HHRN) and 388 to 617 (SREE…NWSL). A disordered region spans residues 623-652 (TESTVSDDTDVSSVTEEISNLSTDDGSSDV). Positions 640–652 (ISNLSTDDGSSDV) are enriched in polar residues.

In terms of assembly, interacts with F-actin.

It localises to the cytoplasm. The protein localises to the cytoskeleton. Functionally, cross-links actin filaments (F-actin). Stabilizes and prevents F-actin depolymerization mediated by profilin. May regulate actin cytoarchitecture, cell cycle, cell division, cell elongation and cytoplasmic tractus. The polypeptide is Fimbrin-4 (Arabidopsis thaliana (Mouse-ear cress)).